The sequence spans 143 residues: FAM161 homolog famh-136 (143 aa).

It belongs to the FAM136 family.

The protein localises to the cytoplasm. Its function is as follows. May play a role in locomotion and behavior. This chain is FAM161 homolog famh-136, found in Caenorhabditis elegans.